The sequence spans 86 residues: Cell division topological specificity factor (86 aa).

This sequence belongs to the MinE family.

Prevents the cell division inhibition by proteins MinC and MinD at internal division sites while permitting inhibition at polar sites. This ensures cell division at the proper site by restricting the formation of a division septum at the midpoint of the long axis of the cell. The sequence is that of Cell division topological specificity factor from Shewanella halifaxensis (strain HAW-EB4).